We begin with the raw amino-acid sequence, 291 residues long: Sesquiterpene cyclase astC (291 aa).

This sequence belongs to the HAD-like hydrolase superfamily.

It carries out the reaction (2E,6E)-farnesyl diphosphate = (S,S)-drim-8-en-11-yl diphosphate. The protein operates within secondary metabolite biosynthesis; terpenoid biosynthesis. In terms of biological role, sesquiterpene cyclase; part of the gene cluster that mediates the biosynthesis of astellolides, drimane-type sesquiterpene esters that show antimicrobial, anti-inflammatory, and anti-tumor activities. The first step in astellolide biosynthesis is performed by the sesquiterpene cyclase astC that catalyzes the formation of drimanyl pyrophosphate from farnesyl pyrophosphate. Drimanyl pyrophosphate is then dephosphorylated by the sesquiterpene phosphatase astI to produce drimanyl monophosphate which is further dephosphorylated to drim-8-ene-11-ol by atsK. Drim-8-ene-11-ol is converted to confertifolin, probably by the cytochrome P450 monooxygenase astD and/or the dehydrogenase astE. The cytochrome P450 monooxygenases astB, astF and astJ then hydroxylate confertifolin at C6, C14, or C15 to form trihydroxy confertifolin. The nonribosomal peptide synthetase astA catalyzes ester bond formation between trihydroxy contifolin and benzoic acid (BA) or 4-hydroxy benzoic acid (4HBA), leading to the formation of dideacetyl astellolides A and B, respectively. Finally, the O-acetyltransferase astG converts dideacetyl astellolides A and B into deacetyl astellolides A and B. In Aspergillus oryzae (strain ATCC 42149 / RIB 40) (Yellow koji mold), this protein is Sesquiterpene cyclase astC.